A 230-amino-acid chain; its full sequence is Sugar fermentation stimulation protein homolog (230 aa).

This sequence belongs to the SfsA family.

The polypeptide is Sugar fermentation stimulation protein homolog (Ruegeria pomeroyi (strain ATCC 700808 / DSM 15171 / DSS-3) (Silicibacter pomeroyi)).